The sequence spans 297 residues: MSSLPYRGRFAPSPTGPLHFGSLLAALGSWLLARHAGGEWHVRIEDIDPPRAEPGASERQLHTLAAFGLHSDGPVLYQSDRDAYYEAALSRLLRSGAAFECSCSRAELAAMGGIHHVCVAPLGIRRAVRLRVPPNTQASFQDALQGRITQDVYSEVGDVVLRRADGYWAYQLAVVVDDAAQGITDVVRGADLLDSTPRQLVLQQALGVAPPRYLHLPLILGADGRKLSKSHAAQPVDDSDPLPALRAAWRALGQAPAALPARASVAGVLQHAVQHFSPQRLPRVASLDAATRIDAPA.

L-glutamate contacts are provided by residues 9-13 (RFAPS) and Glu45. The 'HIGH' region motif lies at 12 to 22 (PSPTGPLHFGS). Zn(2+) is bound by residues Cys101, Cys103, and Cys118. Tyr170 and Arg188 together coordinate L-glutamate. The short motif at 226-230 (KLSKS) is the 'KMSKS' region element. Lys229 serves as a coordination point for ATP.

The protein belongs to the class-I aminoacyl-tRNA synthetase family. GluQ subfamily. Zn(2+) is required as a cofactor.

Catalyzes the tRNA-independent activation of glutamate in presence of ATP and the subsequent transfer of glutamate onto a tRNA(Asp). Glutamate is transferred on the 2-amino-5-(4,5-dihydroxy-2-cyclopenten-1-yl) moiety of the queuosine in the wobble position of the QUC anticodon. The polypeptide is Glutamyl-Q tRNA(Asp) synthetase (Xanthomonas campestris pv. campestris (strain 8004)).